Consider the following 134-residue polypeptide: Arsenate reductase (134 aa).

Active-site nucleophile residues include Cys-11, Cys-83, and Cys-90. Disulfide bonds link Cys-11/Cys-83 and Cys-83/Cys-90.

This sequence belongs to the low molecular weight phosphotyrosine protein phosphatase family. Thioredoxin-coupled ArsC subfamily.

The protein localises to the cytoplasm. It carries out the reaction arsenate + [thioredoxin]-dithiol + H(+) = arsenite + [thioredoxin]-disulfide + H2O. Its function is as follows. Catalyzes the reduction of arsenate [As(V)] to arsenite [As(III)]. This Bacillus cereus (strain 03BB102) protein is Arsenate reductase.